The chain runs to 358 residues: Endo-1,4-beta-xylanase B (358 aa).

Positions 1 to 17 (MRFSASLLLALTGSAAA) are cleaved as a signal peptide. The GH10 domain maps to 40–352 (QGLDAAMKAA…KAAYNAFLRG (313 aa)). Asn136 carries an N-linked (GlcNAc...) asparagine glycan. Residue Glu166 is the Proton donor of the active site. Glu274 serves as the catalytic Nucleophile.

The protein belongs to the glycosyl hydrolase 10 (cellulase F) family.

The protein localises to the secreted. It carries out the reaction Endohydrolysis of (1-&gt;4)-beta-D-xylosidic linkages in xylans.. Its pathway is glycan degradation; xylan degradation. Partial inhibition of activity is detected in the presence of Ag(+), Cu2(+) and SDS. Like most fungal xylanases, activity is completely inhibited by Hg(2+) since Hg(2+) could interact with tryptophan residues and oxidize the indole ring. Beta-mercaptoethanol enhances the enzymatic activity by counteracting the oxidation effects of the S-S linkage between cysteine residues. Endo-1,4-beta-xylanase involved in the hydrolysis of xylan, a major structural heterogeneous polysaccharide found in plant biomass representing the second most abundant polysaccharide in the biosphere, after cellulose. Is more active on soluble wheat arabinoxylan (defined as 100%) than on birchwood xylan (75.4%) and beechwood xylan (70.8%), and less active on insoluble wheat arabinoxylan (17.4%). Xylose is the major hydrolysis product of XynB. This chain is Endo-1,4-beta-xylanase B, found in Humicola insolens (Soft-rot fungus).